A 194-amino-acid chain; its full sequence is Large ribosomal subunit protein bL9c (194 aa).

A chloroplast-targeting transit peptide spans 1-39; sequence MASSTLSSLSSTPLQHSFAANLKTCSQFPNKSSGFMVFA.

This sequence belongs to the bacterial ribosomal protein bL9 family. In terms of assembly, part of the 50S ribosomal subunit.

It is found in the plastid. Its subcellular location is the chloroplast. Binds to the 23S rRNA. The protein is Large ribosomal subunit protein bL9c (RPL9) of Pisum sativum (Garden pea).